The primary structure comprises 49 residues: Large ribosomal subunit protein bL33 (49 aa).

Belongs to the bacterial ribosomal protein bL33 family.

The sequence is that of Large ribosomal subunit protein bL33 from Nitratidesulfovibrio vulgaris (strain ATCC 29579 / DSM 644 / CCUG 34227 / NCIMB 8303 / VKM B-1760 / Hildenborough) (Desulfovibrio vulgaris).